Here is a 226-residue protein sequence, read N- to C-terminus: Deoxyribose-phosphate aldolase (226 aa).

D94 (proton donor/acceptor) is an active-site residue. Catalysis depends on K156, which acts as the Schiff-base intermediate with acetaldehyde. K185 functions as the Proton donor/acceptor in the catalytic mechanism.

This sequence belongs to the DeoC/FbaB aldolase family. DeoC type 1 subfamily.

It is found in the cytoplasm. The enzyme catalyses 2-deoxy-D-ribose 5-phosphate = D-glyceraldehyde 3-phosphate + acetaldehyde. It functions in the pathway carbohydrate degradation; 2-deoxy-D-ribose 1-phosphate degradation; D-glyceraldehyde 3-phosphate and acetaldehyde from 2-deoxy-alpha-D-ribose 1-phosphate: step 2/2. Its function is as follows. Catalyzes a reversible aldol reaction between acetaldehyde and D-glyceraldehyde 3-phosphate to generate 2-deoxy-D-ribose 5-phosphate. The protein is Deoxyribose-phosphate aldolase of Burkholderia lata (strain ATCC 17760 / DSM 23089 / LMG 22485 / NCIMB 9086 / R18194 / 383).